A 221-amino-acid polypeptide reads, in one-letter code: Ribonuclease HII (221 aa).

Residues 29 to 220 (RRVAGVDEVG…LRDLQAGEIG (192 aa)) form the RNase H type-2 domain. 3 residues coordinate a divalent metal cation: Asp-35, Glu-36, and Asp-129. The disordered stretch occupies residues 198–221 (LGPSPQHRRSFAPLRDLQAGEIGG).

Belongs to the RNase HII family. Mn(2+) serves as cofactor. Requires Mg(2+) as cofactor.

The protein localises to the cytoplasm. The enzyme catalyses Endonucleolytic cleavage to 5'-phosphomonoester.. Endonuclease that specifically degrades the RNA of RNA-DNA hybrids. The protein is Ribonuclease HII of Synechococcus sp. (strain JA-3-3Ab) (Cyanobacteria bacterium Yellowstone A-Prime).